The sequence spans 374 residues: Chaperone protein DnaJ (374 aa).

Residues 5-69 form the J domain; the sequence is NYYQILGVSK…QKRAAYDRLG (65 aa). The CR-type zinc finger occupies 137–215; sequence GIEKNISFSS…CHGMGRYHKQ (79 aa). Zn(2+)-binding residues include Cys-150, Cys-153, Cys-167, Cys-170, Cys-189, Cys-192, Cys-203, and Cys-206. 4 CXXCXGXG motif repeats span residues 150-157, 167-174, 189-196, and 203-210; these read CDTCHGSG, CDACSGVG, CHKCQGNG, and CKKCHGMG.

This sequence belongs to the DnaJ family. In terms of assembly, homodimer. Zn(2+) is required as a cofactor.

The protein localises to the cytoplasm. Functionally, participates actively in the response to hyperosmotic and heat shock by preventing the aggregation of stress-denatured proteins and by disaggregating proteins, also in an autonomous, DnaK-independent fashion. Unfolded proteins bind initially to DnaJ; upon interaction with the DnaJ-bound protein, DnaK hydrolyzes its bound ATP, resulting in the formation of a stable complex. GrpE releases ADP from DnaK; ATP binding to DnaK triggers the release of the substrate protein, thus completing the reaction cycle. Several rounds of ATP-dependent interactions between DnaJ, DnaK and GrpE are required for fully efficient folding. Also involved, together with DnaK and GrpE, in the DNA replication of plasmids through activation of initiation proteins. The protein is Chaperone protein DnaJ of Rickettsia massiliae (strain Mtu5).